We begin with the raw amino-acid sequence, 255 residues long: Probable iron chelatin transport ATP-binding protein HP_0888 (255 aa).

Residues 3-240 form the ABC transporter domain; it reads LEVKNLSFKY…HNLSALYDTP (238 aa). An ATP-binding site is contributed by 35–42; the sequence is APNGSGKT.

It belongs to the ABC transporter superfamily.

Its subcellular location is the cell inner membrane. Its function is as follows. Part of a binding-protein-dependent transport system for an iron chelatin. Probably responsible for energy coupling to the transport system (Potential). This Helicobacter pylori (strain ATCC 700392 / 26695) (Campylobacter pylori) protein is Probable iron chelatin transport ATP-binding protein HP_0888.